The chain runs to 314 residues: Homoserine kinase (314 aa).

96-106 (PIGSGLGSSAC) provides a ligand contact to ATP.

The protein belongs to the GHMP kinase family. Homoserine kinase subfamily.

Its subcellular location is the cytoplasm. The catalysed reaction is L-homoserine + ATP = O-phospho-L-homoserine + ADP + H(+). Its pathway is amino-acid biosynthesis; L-threonine biosynthesis; L-threonine from L-aspartate: step 4/5. Its function is as follows. Catalyzes the ATP-dependent phosphorylation of L-homoserine to L-homoserine phosphate. The chain is Homoserine kinase from Haemophilus influenzae (strain 86-028NP).